We begin with the raw amino-acid sequence, 281 residues long: MSREEVLVSTDWAEQNLNTDGVVFAEVDEDTTAYDGGHIPGAIKLDWKNELQDHVRRDFVNREGFEKLLSAKGIGNDDTVILYGGNNNWFAAYAYWYFKLYGHSDVKLLDGGRKKWELDGRELTKEEPNRAATAYKAQEPDASIRAFRDEVVDAIGNKNLVDVRSPDEFAGKLLAPAHLPQESAQRAGHIPSAINVPWSKAANEDGTFKSDEELKQVYGEAGLDTDKDTIAYCRIGERSSHTWFVLRELLGHTNVKNYDGSWTEYGSLVGVPIENPQEQGA.

2 consecutive Rhodanese domains span residues 18 to 125 and 154 to 274; these read NTDG…ELTK and AIGN…VPIE. Cysteine 233 functions as the Cysteine persulfide intermediate in the catalytic mechanism. Residue arginine 238 participates in substrate binding.

It catalyses the reaction thiosulfate + hydrogen cyanide = thiocyanate + sulfite + 2 H(+). Functionally, may be a sulfotransferase involved in the formation of thiosulfate. The sequence is that of Putative thiosulfate sulfurtransferase (cysA) from Saccharopolyspora erythraea (Streptomyces erythraeus).